The following is a 502-amino-acid chain: TGF-beta-activated kinase 1 and MAP3K7-binding protein 1 (502 aa).

Positions 1 to 21 are disordered; that stretch reads MAAQRRSLLQSEQQPSWTDDL. A Phosphoserine modification is found at Ser7. Polar residues predominate over residues 7–17; it reads SLLQSEQQPSW. The 338-residue stretch at 28–365 folds into the PPM-type phosphatase domain; sequence GVGSASNRSY…EDMTLLVRNF (338 aa). O-linked (GlcNAc) serine glycosylation occurs at Ser393. Positions 414–437 are enriched in polar residues; it reads QMVNGSHSASTLDEATPTLTNQSP. The tract at residues 414–476 is disordered; that stretch reads QMVNGSHSAS…SLPPGEDGRV (63 aa). Ser421 carries the phosphoserine modification. A Phosphothreonine modification is found at Thr429. A Phosphoserine modification is found at Ser436. Positions 438 to 455 are enriched in low complexity; that stretch reads TLTLQSTNTHTQSSSSSS. A Phosphothreonine modification is found at Thr440.

Interacts with XIAP and BIRC7. Interacts with TRAF6 and MAP3K7; during IL-1 signaling. Identified in the TRIKA2 complex composed of MAP3K7, TAB1 and TAB2. Interacts with TRAF6 and MAPK14; these interactions allow MAPK14 autophosphorylation. Interacts with STING1; interaction takes place following cGAMP activation and promotes TAB1 recruitment to the endoplasmic reticulum, triggering MAP3K7/TAK1 activation and STING1 phosphorylation. In terms of processing, phosphorylated at all three sites Ser-421, Thr-429 and Ser-436 by MAPK14 when cells were exposed to cellular stresses, or stimulated with TNF-alpha, IL1 or LPS. These phosphorylations inhibit TAK1 activation by a feedback control mechanism. Dephosphorylated by DUSP14 at Ser-436, leading to TAB1-MAP3K7/TAK1 complex inactivation in T-cells. Post-translationally, ubiquitinated by MAP3K1 with 'Lys-63'-linked polyubiquitin; leading to activation of TAK1 and of JNK and p38 MAP kinases following EGF and TGF-beta stimulation. Ubiquitinated by ITCH with 'Lys-48'-linked polyubiquitin; leading to proteasomal degradation. Ubiquitinated by RNF114 during maternal-to-zygotic transition; leading to degradation. O-GlcNAcylated at Ser-393 is required for full MAP3K7/TAK1 activation upon stimulation with IL-1 or osmotic stress.

It is found in the cytoplasm. The protein localises to the cytosol. It localises to the endoplasmic reticulum membrane. Its function is as follows. Key adapter protein that plays an essential role in JNK and NF-kappa-B activation and proinflammatory cytokines production in response to stimulation with TLRs and cytokines. Mechanistically, associates with the catalytic domain of MAP3K7/TAK1 to trigger MAP3K7/TAK1 autophosphorylation leading to its full activation. Similarly, associates with MAPK14 and triggers its autophosphorylation and subsequent activation. In turn, MAPK14 phosphorylates TAB1 and inhibits MAP3K7/TAK1 activation in a feedback control mechanism. Also plays a role in recruiting MAPK14 to the TAK1 complex for the phosphorylation of the TAB2 and TAB3 regulatory subunits. The polypeptide is TGF-beta-activated kinase 1 and MAP3K7-binding protein 1 (Tab1) (Mus musculus (Mouse)).